We begin with the raw amino-acid sequence, 282 residues long: Putative hydrolase BceJ2315_61450 (282 aa).

Mg(2+)-binding residues include E124, E126, and D155.

Belongs to the FAH family. It depends on Mg(2+) as a cofactor.

The sequence is that of Putative hydrolase BceJ2315_61450 from Burkholderia cenocepacia (strain ATCC BAA-245 / DSM 16553 / LMG 16656 / NCTC 13227 / J2315 / CF5610) (Burkholderia cepacia (strain J2315)).